Here is a 91-residue protein sequence, read N- to C-terminus: Heat shock protein 30E (91 aa).

Residues 62–91 (RDQIRQPGAPESEGTSPNTGKDGKDPGNSL) are disordered. Positions 82–91 (KDGKDPGNSL) are enriched in basic and acidic residues.

Belongs to the small heat shock protein (HSP20) family.

This is Heat shock protein 30E (hsp30e) from Xenopus laevis (African clawed frog).